Reading from the N-terminus, the 445-residue chain is Tubulin beta-4B chain (445 aa).

An MREI motif motif is present at residues 1 to 4 (MREI). Residue glutamine 11 coordinates GTP. Phosphothreonine is present on threonine 55. Lysine 58 is subject to N6-acetyllysine. Residues glutamate 69, serine 138, glycine 142, threonine 143, and glycine 144 each contribute to the GTP site. Residue glutamate 69 coordinates Mg(2+). A Phosphoserine; by CDK1 modification is found at serine 172. GTP-binding residues include asparagine 204 and asparagine 226. Positions 426 to 445 (QDATAEEEGEFEEEAEEEVA) are disordered. The segment covering 429–445 (TAEEEGEFEEEAEEEVA) has biased composition (acidic residues). Glutamate 438 bears the 5-glutamyl polyglutamate mark.

This sequence belongs to the tubulin family. In terms of assembly, dimer of alpha and beta chains. A typical microtubule is a hollow water-filled tube with an outer diameter of 25 nm and an inner diameter of 15 nM. Alpha-beta heterodimers associate head-to-tail to form protofilaments running lengthwise along the microtubule wall with the beta-tubulin subunit facing the microtubule plus end conferring a structural polarity. Microtubules usually have 13 protofilaments but different protofilament numbers can be found in some organisms and specialized cells. Component of sperm flagellar doublet microtubules. Mg(2+) serves as cofactor. In terms of processing, some glutamate residues at the C-terminus are polyglycylated, resulting in polyglycine chains on the gamma-carboxyl group. Glycylation is mainly limited to tubulin incorporated into axonemes (cilia and flagella) whereas glutamylation is prevalent in neuronal cells, centrioles, axonemes, and the mitotic spindle. Both modifications can coexist on the same protein on adjacent residues, and lowering polyglycylation levels increases polyglutamylation, and reciprocally. Cilia and flagella glycylation is required for their stability and maintenance. Flagella glycylation controls sperm motility. Post-translationally, some glutamate residues at the C-terminus are polyglutamylated, resulting in polyglutamate chains on the gamma-carboxyl group. Polyglutamylation plays a key role in microtubule severing by spastin (SPAST). SPAST preferentially recognizes and acts on microtubules decorated with short polyglutamate tails: severing activity by SPAST increases as the number of glutamates per tubulin rises from one to eight, but decreases beyond this glutamylation threshold. Glutamylation is also involved in cilia motility. Phosphorylated on Ser-172 by CDK1 during the cell cycle, from metaphase to telophase, but not in interphase. This phosphorylation inhibits tubulin incorporation into microtubules.

It is found in the cytoplasm. The protein resides in the cytoskeleton. The protein localises to the flagellum axoneme. Functionally, tubulin is the major constituent of microtubules, a cylinder consisting of laterally associated linear protofilaments composed of alpha- and beta-tubulin heterodimers. Microtubules grow by the addition of GTP-tubulin dimers to the microtubule end, where a stabilizing cap forms. Below the cap, tubulin dimers are in GDP-bound state, owing to GTPase activity of alpha-tubulin. The sequence is that of Tubulin beta-4B chain (TUBB4B) from Bos taurus (Bovine).